The sequence spans 166 residues: Large ribosomal subunit protein uL11 (166 aa).

Arg-67 carries the N5-methylarginine modification.

It belongs to the universal ribosomal protein uL11 family.

In Encephalitozoon cuniculi (strain GB-M1) (Microsporidian parasite), this protein is Large ribosomal subunit protein uL11 (RPL12).